Here is a 237-residue protein sequence, read N- to C-terminus: Class B acid phosphatase (237 aa).

Positions 1 to 25 (MRKITLALSAACLLFSLNNAVVARA) are cleaved as a signal peptide. Asp69 functions as the Nucleophile in the catalytic mechanism. Residues Asp69 and Asp71 each coordinate Mg(2+). Residue Asp71 is the Proton donor of the active site. Residues 137-138 (TG) and Lys177 contribute to the substrate site. Position 192 (Asp192) interacts with Mg(2+).

Belongs to the class B bacterial acid phosphatase family. In terms of assembly, homotetramer. The cofactor is Mg(2+).

It localises to the periplasm. The catalysed reaction is a phosphate monoester + H2O = an alcohol + phosphate. Dephosphorylates several organic phosphate monoesters. Also has a phosphotransferase activity catalyzing the transfer of low-energy phosphate groups from organic phosphate monoesters to free hydroxyl groups of various organic compounds. This Enterobacter sp. (strain 638) protein is Class B acid phosphatase.